A 1889-amino-acid chain; its full sequence is Protein TIC 214 (1889 aa).

6 helical membrane passes run 11–31 (LISL…YYGF), 67–87 (FIAG…HLAL), 88–108 (GKPH…FFWN), 127–147 (LSIQ…HFIL), 175–195 (VGWL…LVWI), and 224–244 (IFSI…PSPI). Acidic residues predominate over residues 255 to 265 (PEEVGESEEER). Disordered stretches follow at residues 255-303 (PEEV…PSKE) and 1610-1633 (SNQE…KKKQ). Residues 279-293 (NQKQGTEENTSSSLF) show a composition bias toward polar residues.

This sequence belongs to the TIC214 family. Part of the Tic complex.

It localises to the plastid. Its subcellular location is the chloroplast inner membrane. In terms of biological role, involved in protein precursor import into chloroplasts. May be part of an intermediate translocation complex acting as a protein-conducting channel at the inner envelope. The protein is Protein TIC 214 of Gossypium barbadense (Sea Island cotton).